A 169-amino-acid polypeptide reads, in one-letter code: MIVGVGIDVLEVERVPEKFAERILGESEKRLFLTRKRRREFIAGRFALKEAFFKALGTGLNGHSFTDVEFLESNGKPVLCVHKDFGFFNYAHVSLSHDRFAVALVVLEKRKGDIIVEGDESFLRKRFEVLERSVEGWEIETSLPPFTLKKLLESSGCRLVRYGNILIGE.

Mg(2+) is bound by residues Asp-8 and Glu-50.

Belongs to the P-Pant transferase superfamily. AcpS family. The cofactor is Mg(2+).

Its subcellular location is the cytoplasm. It catalyses the reaction apo-[ACP] + CoA = holo-[ACP] + adenosine 3',5'-bisphosphate + H(+). Functionally, transfers the 4'-phosphopantetheine moiety from coenzyme A to a Ser of acyl-carrier-protein. The chain is Holo-[acyl-carrier-protein] synthase from Thermotoga maritima (strain ATCC 43589 / DSM 3109 / JCM 10099 / NBRC 100826 / MSB8).